The primary structure comprises 886 residues: General transcription factor 3C polypeptide 3 (886 aa).

A disordered region spans residues 1 to 121; sequence MSGFSPELID…TPEQPTAGDV (121 aa). S2 carries the N-acetylserine modification. Basic and acidic residues predominate over residues 12–44; sequence LEGKISFEEFERRREERKTREKKSLQEKGKLSA. At S43 the chain carries Phosphoserine. Residues 53-63 show a composition bias toward polar residues; sequence VPSSSGINSTK. Positions 92–113 are enriched in acidic residues; sequence ENEDDEEEEEEEEEEEEEEETP. 11 TPR repeats span residues 149-182, 183-216, 217-250, 252-284, 290-323, 326-361, 421-454, 456-489, 491-523, 733-766, and 811-844; these read LRGLMGEANIRFARGEREEAILMCMEIIRQAPLA, YEPFSTLAMIYEDQGDMEKSLQFELIAAHLNPSD, TEEWVRLAEMSLEQDNIKQAIFCYTKALKYEPTN, RYLWERSSLYEQMGDHKMAMDGYRRILNLLSPS, MQLARDMAKSYYEANDVTSAINIIDEAFSKHQGL, MEDVNIAAELYISNKQYDKALEIITDFSGIVLEKKT, GDLYLDVAEAFLDVGEYNSALPLLSALVCSERYN, AVVWLRHAECLKALGYMERAAESYGKVVDLAPLH, DARISLSTLQQQLGQPEKALEALEPMYDPDTLA, HALCVLNGHNAFVSGSFKHALGQYVQAFRTHPDE, and QESFYNLGRGLHQLGLIHLAIHYYQKALELPPLV. Phosphoserine is present on S282.

Part of the TFIIIC subcomplex TFIIIC2, consisting of six subunits, GTF3C1, GTF3C2, GTF3C3, GTF3C4, GTF3C5 and GTF3C6. Interacts with BRF1 and TBP.

Its subcellular location is the nucleus. Functionally, involved in RNA polymerase III-mediated transcription. Integral, tightly associated component of the DNA-binding TFIIIC2 subcomplex that directly binds tRNA and virus-associated RNA promoters. The sequence is that of General transcription factor 3C polypeptide 3 (GTF3C3) from Homo sapiens (Human).